We begin with the raw amino-acid sequence, 307 residues long: Taste receptor type 2 member 10 (307 aa).

The Extracellular segment spans residues 1-6 (MLRVVE). Residues 7–27 (GIFIFVVVSESVFGVLGNGFI) form a helical membrane-spanning segment. Over 28-42 (GLVNCIDCAKNKLST) the chain is Cytoplasmic. Residues 43–63 (IGFILTGLAISRIFLIWIIIT) traverse the membrane as a helical segment. Residues 64–100 (DGFIQIFSPNIYASGNLIEYISYFWVIGNQSSMWFAT) are Extracellular-facing. N-linked (GlcNAc...) asparagine glycosylation occurs at Asn-92. A helical membrane pass occupies residues 101–121 (SLSIFYFLKIANFSNYIFLWL). The Cytoplasmic portion of the chain corresponds to 122 to 126 (KSRTN). A helical transmembrane segment spans residues 127 to 147 (MVLPFMIVFLLISSLLNFAYI). Topologically, residues 148-179 (AKILNDYKTKNDTVWDLNMYKSEYFIKQILLN) are extracellular. N-linked (GlcNAc...) asparagine glycosylation occurs at Asn-158. Residues 180–200 (LGVIFFFTLSLITCIFLIISL) form a helical membrane-spanning segment. Over 201–227 (WRHNRQMQSNVTGLRDSNTEAHVKAMK) the chain is Cytoplasmic. The helical transmembrane segment at 228–248 (VLISFIILFILYFIGMAIEIS) threads the bilayer. At 249 to 257 (CFTVRENKL) the chain is on the extracellular side. A helical membrane pass occupies residues 258-278 (LLMFGMTTTAIYPWGHSFILI). Residues 279-307 (LGNSKLKQASLRVLQQLKCCEKRKNLRVT) are Cytoplasmic-facing.

This sequence belongs to the G-protein coupled receptor T2R family. As to expression, expressed in subsets of taste receptor cells of the tongue and palate epithelium and exclusively in gustducin-positive cells.

It is found in the membrane. Its function is as follows. Gustducin-coupled strychnine receptor implicated in the perception of bitter compounds in the oral cavity and the gastrointestinal tract. Signals through PLCB2 and the calcium-regulated cation channel TRPM5. This is Taste receptor type 2 member 10 (TAS2R10) from Homo sapiens (Human).